The primary structure comprises 151 residues: Small ribosomal subunit protein bS6 (151 aa).

The segment at 97–151 is disordered; the sequence is EAEPSAMMQKRDRDDRKDRDRGDRPRRRDDDFGGGDRGDRGDRGDRPERNFGGEN. Residues 105–151 show a composition bias toward basic and acidic residues; that stretch reads QKRDRDDRKDRDRGDRPRRRDDDFGGGDRGDRGDRGDRPERNFGGEN.

This sequence belongs to the bacterial ribosomal protein bS6 family.

Binds together with bS18 to 16S ribosomal RNA. This chain is Small ribosomal subunit protein bS6, found in Methylorubrum extorquens (strain CM4 / NCIMB 13688) (Methylobacterium extorquens).